A 77-amino-acid polypeptide reads, in one-letter code: Conotoxin ArMSGL-0143 (77 aa).

Residues 1–22 (MSGLGIMLLTLLLLVFMETSHQ) form the signal peptide. Residues 23 to 44 (DAGEKQATQRDAINVRRRRSLT) constitute a propeptide that is removed on maturation. Disulfide bonds link C51–C63, C55–C71, and C62–C75. F76 carries the post-translational modification Phenylalanine amide.

This sequence belongs to the conotoxin O3 superfamily. In terms of tissue distribution, expressed by the venom duct.

It localises to the secreted. This Conus arenatus (Sand-dusted cone) protein is Conotoxin ArMSGL-0143.